A 294-amino-acid chain; its full sequence is Bifunctional protein FolD (294 aa).

Residues Gly166 to Ser168, Ser191, and Ile232 each bind NADP(+).

This sequence belongs to the tetrahydrofolate dehydrogenase/cyclohydrolase family. Homodimer.

It carries out the reaction (6R)-5,10-methylene-5,6,7,8-tetrahydrofolate + NADP(+) = (6R)-5,10-methenyltetrahydrofolate + NADPH. It catalyses the reaction (6R)-5,10-methenyltetrahydrofolate + H2O = (6R)-10-formyltetrahydrofolate + H(+). The protein operates within one-carbon metabolism; tetrahydrofolate interconversion. In terms of biological role, catalyzes the oxidation of 5,10-methylenetetrahydrofolate to 5,10-methenyltetrahydrofolate and then the hydrolysis of 5,10-methenyltetrahydrofolate to 10-formyltetrahydrofolate. The polypeptide is Bifunctional protein FolD (Nitrobacter winogradskyi (strain ATCC 25391 / DSM 10237 / CIP 104748 / NCIMB 11846 / Nb-255)).